We begin with the raw amino-acid sequence, 155 residues long: MKTPKMNVESFNLDHTKVKAPYVRIADRKKGVNGDLIVKYDVRFKQPNKDHMDMPSLHSLEHLVAEIIRNHASYVIDWSPMGCQTGFYLTVLNHDNYTEILEILEKTMQDVLKATEVPASNEKQCGWAANHTLEGAQNLARAFLDKRAEWSEVGV.

Fe cation-binding residues include H58, H62, and C125.

The protein belongs to the LuxS family. In terms of assembly, homodimer. It depends on Fe cation as a cofactor.

The catalysed reaction is S-(5-deoxy-D-ribos-5-yl)-L-homocysteine = (S)-4,5-dihydroxypentane-2,3-dione + L-homocysteine. Functionally, involved in the synthesis of autoinducer 2 (AI-2) which is secreted by bacteria and is used to communicate both the cell density and the metabolic potential of the environment. The regulation of gene expression in response to changes in cell density is called quorum sensing. Catalyzes the transformation of S-ribosylhomocysteine (RHC) to homocysteine (HC) and 4,5-dihydroxy-2,3-pentadione (DPD). This chain is S-ribosylhomocysteine lyase, found in Helicobacter pylori (strain Shi470).